Consider the following 208-residue polypeptide: FMN-dependent NADH:quinone oxidoreductase 4 (208 aa).

This sequence belongs to the azoreductase type 1 family. Homodimer. It depends on FMN as a cofactor.

It carries out the reaction 2 a quinone + NADH + H(+) = 2 a 1,4-benzosemiquinone + NAD(+). It catalyses the reaction N,N-dimethyl-1,4-phenylenediamine + anthranilate + 2 NAD(+) = 2-(4-dimethylaminophenyl)diazenylbenzoate + 2 NADH + 2 H(+). In terms of biological role, quinone reductase that provides resistance to thiol-specific stress caused by electrophilic quinones. Functionally, also exhibits azoreductase activity. Catalyzes the reductive cleavage of the azo bond in aromatic azo compounds to the corresponding amines. In Bacillus anthracis, this protein is FMN-dependent NADH:quinone oxidoreductase 4.